The primary structure comprises 63 residues: Small ribosomal subunit protein eS30 (63 aa).

The tract at residues 1 to 33 is disordered; that stretch reads MGKVHGSLARAGKVKSQTPKVEKQEKPKKPQGR.

It belongs to the eukaryotic ribosomal protein eS30 family. As to quaternary structure, component of the small ribosomal subunit. Mature ribosomes consist of a small (40S) and a large (60S) subunit. The 40S subunit contains about 32 different proteins and 1 molecule of RNA (18S). The 60S subunit contains 45 different proteins and 3 molecules of RNA (25S, 5.8S and 5S).

It is found in the cytoplasm. In terms of biological role, component of the ribosome, a large ribonucleoprotein complex responsible for the synthesis of proteins in the cell. The small ribosomal subunit (SSU) binds messenger RNAs (mRNAs) and translates the encoded message by selecting cognate aminoacyl-transfer RNA (tRNA) molecules. The large subunit (LSU) contains the ribosomal catalytic site termed the peptidyl transferase center (PTC), which catalyzes the formation of peptide bonds, thereby polymerizing the amino acids delivered by tRNAs into a polypeptide chain. The nascent polypeptides leave the ribosome through a tunnel in the LSU and interact with protein factors that function in enzymatic processing, targeting, and the membrane insertion of nascent chains at the exit of the ribosomal tunnel. This Candida albicans (strain SC5314 / ATCC MYA-2876) (Yeast) protein is Small ribosomal subunit protein eS30 (RPS30).